The chain runs to 209 residues: MSKVHVFDHPLIQHKLSYIRDARTGTKEFRELVDEVGMLMAYEVTRDLELQDVEIQTPVTKMTAKRLAGKKLAIVPILRAGLGMTDGVLSLVPAARVGHIGLYRDPETLEAVEYFAKMPQDIDERQIIVVDPMLATGASAIEAISSLKKRGAKSIRFMCLIAAPEGVEKMQEAHPDVDIYIAALDEKLNDKAYITPGLGDAGDRLFGTK.

Residues Arg79, Arg104, and 131–139 (DPMLATGAS) each bind 5-phospho-alpha-D-ribose 1-diphosphate. Residues Ile194 and 199–201 (GDA) each bind uracil. Asp200 is a 5-phospho-alpha-D-ribose 1-diphosphate binding site.

The protein belongs to the UPRTase family. Requires Mg(2+) as cofactor.

It catalyses the reaction UMP + diphosphate = 5-phospho-alpha-D-ribose 1-diphosphate + uracil. Its pathway is pyrimidine metabolism; UMP biosynthesis via salvage pathway; UMP from uracil: step 1/1. With respect to regulation, allosterically activated by GTP. Catalyzes the conversion of uracil and 5-phospho-alpha-D-ribose 1-diphosphate (PRPP) to UMP and diphosphate. This chain is Uracil phosphoribosyltransferase, found in Staphylococcus epidermidis (strain ATCC 35984 / DSM 28319 / BCRC 17069 / CCUG 31568 / BM 3577 / RP62A).